The chain runs to 338 residues: Lipoate-protein ligase A (338 aa).

Positions 29–216 (SPNQRVLFLW…AFFAYYDEQV (188 aa)) constitute a BPL/LPL catalytic domain. ATP contacts are provided by residues Arg71, 76-79 (GAVF), and Lys134. Position 134 (Lys134) interacts with (R)-lipoate.

It belongs to the LplA family. Monomer.

It localises to the cytoplasm. The catalysed reaction is L-lysyl-[lipoyl-carrier protein] + (R)-lipoate + ATP = N(6)-[(R)-lipoyl]-L-lysyl-[lipoyl-carrier protein] + AMP + diphosphate + H(+). It participates in protein modification; protein lipoylation via exogenous pathway; protein N(6)-(lipoyl)lysine from lipoate: step 1/2. Its pathway is protein modification; protein lipoylation via exogenous pathway; protein N(6)-(lipoyl)lysine from lipoate: step 2/2. In terms of biological role, catalyzes both the ATP-dependent activation of exogenously supplied lipoate to lipoyl-AMP and the transfer of the activated lipoyl onto the lipoyl domains of lipoate-dependent enzymes. The chain is Lipoate-protein ligase A from Yersinia pseudotuberculosis serotype O:1b (strain IP 31758).